The following is an 899-amino-acid chain: MQKTDGIRIPGVILDELKTLDYSQDERFSISEGKKRRRGNGKHLSRKEKRKMERADKKRKIISTREINSSRLKSAPTSEKRSANAGVKNVGKQANGKNPISSDESESNENWDSDEVLTDEVAEESGEQAMSAEETMKKLESLKRKAKGIQGAENSGEIKGNSYEKKHIRNRDTNENFVSYPLAPSDRSAFERDEMDMQYYAKKLGLKGERKAIHAKDEFDAIGGLLEGLEYFENYGKSDEEYGDFATETNSMRKDDEASEKAFSSDDDLSASDFEDSDGLSESDNDSVADSDDNYRREKENPYVAPTQSVESYVPPSLRKKLDDSENNSTLSEISKKVNSSLNKLSDSNITIIITDLNRLYDSLPRQYVTESLTKGILNIISQNQKLLDGFIMNYAALAYTLSKLRGIEVGAFFIQKTVEAFLHHYEEEMENILKDQQSKISSKICINIATLLSYCYNFGFVSCRLIYDIIRIFVADPNEFTTELLLRIISISGQLIRGDDPSALRDIRSELLKNAKNLKEQSPRLRFLMDTMSDLKNNRLKPSILATDHHPLKKNLQSILNSSSSWEPLQVSLEDIKNIDSKGKWWLVGASWRGNMENAFEVSINNENDASKSKKSKISIEDDLLDDIPDWNIIARQQRMNTDIRRAIFISIMSAQDYLDAFSKLEKLSLKNKQVLEIPRIVLHCLLADSGSNGYNHYYALVANKICERYSHLSKSFQFLFWDVIKKFEDKEFDSESDTDEEDDLDDKEKLLRISNQGRFFGSLLANDILKLDVFKHVPFMGGLNTEGMLFMEILLFQLFLTVAKKSEKKLKMDESGNKRIIYSDDYLRDVLTKNVKSENMLFILKGLKWFINKKFRYHNFLAGKKGDKAFDRDERRLAWASKAAKSIIDKELENIDS.

The span at 24–33 (QDERFSISEG) shows a compositional bias: basic and acidic residues. Disordered stretches follow at residues 24–181 (QDER…VSYP) and 248–326 (ETNS…DDSE). Positions 34–49 (KKRRRGNGKHLSRKEK) are enriched in basic residues. Residues 65 to 77 (REINSSRLKSAPT) show a composition bias toward polar residues. The segment covering 103–126 (DESESNENWDSDEVLTDEVAEESG) has biased composition (acidic residues). Basic and acidic residues-rich tracts occupy residues 134-143 (ETMKKLESLK), 162-174 (SYEKKHIRNRDTN), and 251-264 (SMRKDDEASEKAFS). The span at 265 to 292 (SDDDLSASDFEDSDGLSESDNDSVADSD) shows a compositional bias: acidic residues. In terms of domain architecture, MIF4G spans 335-540 (SKKVNSSLNK…DTMSDLKNNR (206 aa)). In terms of domain architecture, MI spans 644 to 781 (DIRRAIFISI…KLDVFKHVPF (138 aa)). Residue S736 is modified to Phosphoserine.

This sequence belongs to the CWC22 family. As to quaternary structure, interacts with PLC1.

It is found in the nucleus. It localises to the nucleolus. Involved in osmoregulatory glycerol response, probably through its interaction with PLC1 which regulates the expression of GDP1. This chain is Suppressor of glycerol defect protein 1 (SGD1), found in Saccharomyces cerevisiae (strain ATCC 204508 / S288c) (Baker's yeast).